We begin with the raw amino-acid sequence, 541 residues long: Ascorbate transporter, chloroplastic (541 aa).

A chloroplast-targeting transit peptide spans 1-28 (MALGGLISNRNFGSFIGSGNGCQRLGKS). The next 11 helical transmembrane spans lie at 133 to 155 (VIVL…MSIA), 170 to 190 (VGLI…LGGI), 199 to 219 (VVLG…PIAA), 221 to 241 (LGLP…GVAM), 263 to 283 (LVYS…PMLI), 286 to 306 (FGWP…FLLW), 352 to 372 (VWAL…LLTW), 390 to 410 (LLCV…GWIA), 430 to 450 (IGFL…TPAM), 481 to 501 (AGVL…FGTA), and 515 to 535 (VFKV…LFAT).

This sequence belongs to the major facilitator superfamily. Sodium/anion cotransporter (TC 2.A.1.14) family. As to expression, expressed in stems, developing siliques, leaf mesophyll cells and sepals of mature flowers. Not detected in roots. Detected in palisade tissue rather than spongy tissue from the leaves.

The protein resides in the plastid. Its subcellular location is the chloroplast inner membrane. Insensitive to dehydroascorbate, p-isoascorbate, inorganic phosphate, glutamate, ATP, p-aminohippuric acid or tetraethylammonium. Functionally, inorganic phosphate and probable anion transporter. Ascorbate transporter bridging the chloroplast envelope. Transports ascorbate from the cytosol into the chloroplast. Requires chloride ions and the presence of an electrochemical potential across the membrane for activity. This chain is Ascorbate transporter, chloroplastic (PHT4;4), found in Arabidopsis thaliana (Mouse-ear cress).